Here is a 246-residue protein sequence, read N- to C-terminus: MRHQDVAIIIPSRLSSTRLKQKPLQLIGSITLIERVFKQVNQAGLEHTYVATDSEEIASVITKVGGKVIFTDSAIPTGTDRTYEAFKLIPNNQNINYIVNVQGDMPFIEPSSILKIIEYLKNSKYDVVTPIVKVDRESVKASSNVTVAVDSAGTALYFSRSLIPNGAEEFLYHVGMYGFRKNALEKFVSLKPTFLEKTERLEQLRVLENGMTIGTCLVENVPISVDTEEDLKKAVKFYENISKLGL.

Belongs to the KdsB family.

It localises to the cytoplasm. The catalysed reaction is 3-deoxy-alpha-D-manno-oct-2-ulosonate + CTP = CMP-3-deoxy-beta-D-manno-octulosonate + diphosphate. It participates in nucleotide-sugar biosynthesis; CMP-3-deoxy-D-manno-octulosonate biosynthesis; CMP-3-deoxy-D-manno-octulosonate from 3-deoxy-D-manno-octulosonate and CTP: step 1/1. The protein operates within bacterial outer membrane biogenesis; lipopolysaccharide biosynthesis. Its function is as follows. Activates KDO (a required 8-carbon sugar) for incorporation into bacterial lipopolysaccharide in Gram-negative bacteria. The sequence is that of 3-deoxy-manno-octulosonate cytidylyltransferase from Rickettsia conorii (strain ATCC VR-613 / Malish 7).